Consider the following 333-residue polypeptide: Methionine import ATP-binding protein MetN 1 (333 aa).

An ABC transporter domain is found at Ile-2 to Val-241. An ATP-binding site is contributed by Gly-38–Ser-45.

This sequence belongs to the ABC transporter superfamily. Methionine importer (TC 3.A.1.24) family. The complex is composed of two ATP-binding proteins (MetN), two transmembrane proteins (MetI) and a solute-binding protein (MetQ).

It localises to the cell membrane. It catalyses the reaction L-methionine(out) + ATP + H2O = L-methionine(in) + ADP + phosphate + H(+). The catalysed reaction is D-methionine(out) + ATP + H2O = D-methionine(in) + ADP + phosphate + H(+). Its function is as follows. Part of the ABC transporter complex MetNIQ involved in methionine import. Responsible for energy coupling to the transport system. In Bacillus licheniformis (strain ATCC 14580 / DSM 13 / JCM 2505 / CCUG 7422 / NBRC 12200 / NCIMB 9375 / NCTC 10341 / NRRL NRS-1264 / Gibson 46), this protein is Methionine import ATP-binding protein MetN 1.